A 338-amino-acid chain; its full sequence is Holliday junction branch migration complex subunit RuvB (338 aa).

Positions 4–184 (ADRLMSAAAV…FGIVQRLEFY (181 aa)) are large ATPase domain (RuvB-L). ATP is bound by residues Ile-23, Arg-24, Gly-65, Lys-68, Thr-69, Thr-70, 131–133 (EDY), Arg-174, Tyr-184, and Arg-221. Thr-69 provides a ligand contact to Mg(2+). Residues 185 to 255 (QTGDLQHIVS…VAVSALNMLN (71 aa)) form a small ATPAse domain (RuvB-S) region. Positions 258–338 (TEGFDFMDRK…GLEEHGGDPE (81 aa)) are head domain (RuvB-H). Residues Arg-294, Arg-313, and Arg-318 each coordinate DNA.

This sequence belongs to the RuvB family. In terms of assembly, homohexamer. Forms an RuvA(8)-RuvB(12)-Holliday junction (HJ) complex. HJ DNA is sandwiched between 2 RuvA tetramers; dsDNA enters through RuvA and exits via RuvB. An RuvB hexamer assembles on each DNA strand where it exits the tetramer. Each RuvB hexamer is contacted by two RuvA subunits (via domain III) on 2 adjacent RuvB subunits; this complex drives branch migration. In the full resolvosome a probable DNA-RuvA(4)-RuvB(12)-RuvC(2) complex forms which resolves the HJ.

It localises to the cytoplasm. It catalyses the reaction ATP + H2O = ADP + phosphate + H(+). The RuvA-RuvB-RuvC complex processes Holliday junction (HJ) DNA during genetic recombination and DNA repair, while the RuvA-RuvB complex plays an important role in the rescue of blocked DNA replication forks via replication fork reversal (RFR). RuvA specifically binds to HJ cruciform DNA, conferring on it an open structure. The RuvB hexamer acts as an ATP-dependent pump, pulling dsDNA into and through the RuvAB complex. RuvB forms 2 homohexamers on either side of HJ DNA bound by 1 or 2 RuvA tetramers; 4 subunits per hexamer contact DNA at a time. Coordinated motions by a converter formed by DNA-disengaged RuvB subunits stimulates ATP hydrolysis and nucleotide exchange. Immobilization of the converter enables RuvB to convert the ATP-contained energy into a lever motion, pulling 2 nucleotides of DNA out of the RuvA tetramer per ATP hydrolyzed, thus driving DNA branch migration. The RuvB motors rotate together with the DNA substrate, which together with the progressing nucleotide cycle form the mechanistic basis for DNA recombination by continuous HJ branch migration. Branch migration allows RuvC to scan DNA until it finds its consensus sequence, where it cleaves and resolves cruciform DNA. This Sodalis glossinidius (strain morsitans) protein is Holliday junction branch migration complex subunit RuvB.